The following is a 401-amino-acid chain: 1-deoxy-D-xylulose 5-phosphate reductoisomerase (401 aa).

7 residues coordinate NADPH: T11, G12, S13, I14, R38, N39, and N125. K126 lines the 1-deoxy-D-xylulose 5-phosphate pocket. Residue E127 participates in NADPH binding. D151 lines the Mn(2+) pocket. Residues S152, E153, S179, and H202 each contribute to the 1-deoxy-D-xylulose 5-phosphate site. E153 provides a ligand contact to Mn(2+). An NADPH-binding site is contributed by G208. S215, N220, K221, and E224 together coordinate 1-deoxy-D-xylulose 5-phosphate. E224 contacts Mn(2+).

It belongs to the DXR family. The cofactor is Mg(2+). Mn(2+) serves as cofactor.

The catalysed reaction is 2-C-methyl-D-erythritol 4-phosphate + NADP(+) = 1-deoxy-D-xylulose 5-phosphate + NADPH + H(+). It participates in isoprenoid biosynthesis; isopentenyl diphosphate biosynthesis via DXP pathway; isopentenyl diphosphate from 1-deoxy-D-xylulose 5-phosphate: step 1/6. In terms of biological role, catalyzes the NADPH-dependent rearrangement and reduction of 1-deoxy-D-xylulose-5-phosphate (DXP) to 2-C-methyl-D-erythritol 4-phosphate (MEP). This Paraburkholderia phytofirmans (strain DSM 17436 / LMG 22146 / PsJN) (Burkholderia phytofirmans) protein is 1-deoxy-D-xylulose 5-phosphate reductoisomerase.